A 48-amino-acid polypeptide reads, in one-letter code: Sperm protamine P1 (48 aa).

This sequence belongs to the protamine P1 family. As to quaternary structure, cross-linked by interchain disulfide bonds around the DNA-helix. As to expression, testis.

The protein resides in the nucleus. Its subcellular location is the chromosome. Its function is as follows. Protamines substitute for histones in the chromatin of sperm during the haploid phase of spermatogenesis. They compact sperm DNA into a highly condensed, stable and inactive complex. The sequence is that of Sperm protamine P1 (PRM1) from Cavia porcellus (Guinea pig).